The primary structure comprises 687 residues: Protein-glutamine gamma-glutamyltransferase 2 (687 aa).

An N-acetylalanine modification is found at alanine 2. Intrachain disulfides connect cysteine 230-cysteine 370 and cysteine 370-cysteine 371. Catalysis depends on residues cysteine 277, histidine 335, and aspartate 358. Ca(2+) contacts are provided by asparagine 398, aspartate 400, glutamate 437, glutamate 447, and glutamate 452. Position 468 is an N6-acetyllysine (lysine 468). Position 476-483 (arginine 476–methionine 483) interacts with GTP. Glutamate 539 lines the Ca(2+) pocket. A GTP-binding site is contributed by arginine 580–tyrosine 583. Glutamine 633 is covalently cross-linked (Isoglutamyl lysine isopeptide (Gln-Lys) (interchain with K-?)).

The protein belongs to the transglutaminase superfamily. Transglutaminase family. Monomer. Interacts with phospholipase C; promoting alpha-1 adrenergic receptor signaling. Interacts with PLCD1. Requires Ca(2+) as cofactor. Post-translationally, disulfide bond formation inactivates the calcium-dependent acyltransferase activity. Cys-370 can form disulfide bonds with both Cys-230 and Cys-371: formation of a disulfide bond between Cys-230 and Cys-370 facilitates formation of the disulfide between Cys-370 and Cys-371, which promotes inactivation of the acyltransferase activity. May also form interchain disulfids between Cys-230 and Cys-370. Ca(2+) protects against disulfide bond formation and inactivation. In terms of processing, auto-transglutaminated: Forms covalent cross-links mediated by transglutaminase between Gln-633 and the epsilon-amino group of a lysine residue of itself or HMGB1, forming homopolymers and heteropolymers, respectively. S-nitrosylated, leading to inactivation of the acyltransferase activity. As to expression, highest levels are detected in the lung. Lower levels are found in the liver, spleen and heart, but not in the brain.

It is found in the cytoplasm. The protein localises to the cytosol. The protein resides in the nucleus. Its subcellular location is the chromosome. It localises to the secreted. It is found in the extracellular space. The protein localises to the extracellular matrix. The protein resides in the cell membrane. Its subcellular location is the mitochondrion. It carries out the reaction L-glutaminyl-[protein] + L-lysyl-[protein] = [protein]-L-lysyl-N(6)-5-L-glutamyl-[protein] + NH4(+). It catalyses the reaction L-glutaminyl-[protein] + serotonin = 5-serotonyl-L-glutamyl-[protein] + NH4(+). The enzyme catalyses L-glutaminyl-[protein] + dopamine = 5-dopaminyl-L-glutamyl-[protein] + NH4(+). The catalysed reaction is L-glutaminyl-[protein] + histamine = 5-histaminyl-L-glutamyl-[protein] + NH4(+). It carries out the reaction L-glutaminyl-[protein] + (R)-noradrenaline = 5-(R)-noradrenalinyl-L-glutamyl-[protein] + NH4(+). It catalyses the reaction L-glutaminyl-[protein] + H2O = L-glutamyl-[protein] + NH4(+). With respect to regulation, acyltransferase activity is regulated by the binding of GTP and Ca(2+): inactivated by GTP, which stabilizes its closed structure, thereby obstructing the accessibility of substrates to the active sites. In contrast, Ca(2+) acts as a cofactor by inducing conformational change to the active open form. In absence of Ca(2+), Mg(2+) may bind Ca(2+)-binding sites, promoting GTP-binding and subsequent inhibition of the acyltransferase activity. Extracellularly reduced and activated by CLIC3. Its function is as follows. Calcium-dependent acyltransferase that catalyzes the formation of covalent bonds between peptide-bound glutamine and various primary amines, such as gamma-amino group of peptide-bound lysine, or mono- and polyamines, thereby producing cross-linked or aminated proteins, respectively. Involved in many biological processes, such as bone development, angiogenesis, wound healing, cellular differentiation, chromatin modification and apoptosis. Acts as a protein-glutamine gamma-glutamyltransferase by mediating the cross-linking of proteins, such as ACO2, HSPB6, FN1, HMGB1, RAP1GDS1, SLC25A4/ANT1, SPP1 and WDR54. Under physiological conditions, the protein cross-linking activity is inhibited by GTP; inhibition is relieved by Ca(2+) in response to various stresses. When secreted, catalyzes cross-linking of proteins of the extracellular matrix, such as FN1 and SPP1 resulting in the formation of scaffolds. Plays a key role during apoptosis, both by (1) promoting the cross-linking of cytoskeletal proteins resulting in condensation of the cytoplasm, and by (2) mediating cross-linking proteins of the extracellular matrix, resulting in the irreversible formation of scaffolds that stabilize the integrity of the dying cells before their clearance by phagocytosis, thereby preventing the leakage of harmful intracellular components. In addition to protein cross-linking, can use different monoamine substrates to catalyze a vast array of protein post-translational modifications: mediates aminylation of serotonin, dopamine, noradrenaline or histamine into glutamine residues of target proteins to generate protein serotonylation, dopaminylation, noradrenalinylation or histaminylation, respectively. Mediates protein serotonylation of small GTPases during activation and aggregation of platelets, leading to constitutive activation of these GTPases. Plays a key role in chromatin organization by mediating serotonylation and dopaminylation of histone H3. Catalyzes serotonylation of 'Gln-5' of histone H3 (H3Q5ser) during serotonergic neuron differentiation, thereby facilitating transcription. Acts as a mediator of neurotransmission-independent role of nuclear dopamine in ventral tegmental area (VTA) neurons: catalyzes dopaminylation of 'Gln-5' of histone H3 (H3Q5dop), thereby regulating relapse-related transcriptional plasticity in the reward system. Regulates vein remodeling by mediating serotonylation and subsequent inactivation of ATP2A2/SERCA2. Also acts as a protein deamidase by mediating the side chain deamidation of specific glutamine residues of proteins to glutamate. Catalyzes specific deamidation of protein gliadin, a component of wheat gluten in the diet. May also act as an isopeptidase cleaving the previously formed cross-links. Also able to participate in signaling pathways independently of its acyltransferase activity: acts as a signal transducer in alpha-1 adrenergic receptor-mediated stimulation of phospholipase C-delta (PLCD) activity and is required for coupling alpha-1 adrenergic agonists to the stimulation of phosphoinositide lipid metabolism. This Bos taurus (Bovine) protein is Protein-glutamine gamma-glutamyltransferase 2.